The sequence spans 112 residues: Protein Churchill (112 aa).

Residues Cys2, Cys5, Cys30, Cys33, His59, Cys61, Cys64, His66, His71, Cys88, and Cys91 each coordinate Zn(2+).

Belongs to the Churchill family.

Transcriptional activator that mediates FGF signaling during neural development. Plays a role in the regulation of cell movement. Its function is as follows. Does not bind DNA by itself. The protein is Protein Churchill (CHURC1) of Homo sapiens (Human).